Reading from the N-terminus, the 130-residue chain is Small ribosomal subunit protein uS11c (130 aa).

This sequence belongs to the universal ribosomal protein uS11 family. Part of the 30S ribosomal subunit.

The protein resides in the plastid. The protein is Small ribosomal subunit protein uS11c of Aneura mirabilis (Parasitic liverwort).